The sequence spans 517 residues: UDP-N-acetylmuramoyl-L-alanyl-D-glutamate--2,6-diaminopimelate ligase (517 aa).

Residues L34 and S36 each coordinate UDP-N-acetyl-alpha-D-muramoyl-L-alanyl-D-glutamate. An ATP-binding site is contributed by 122–128 (GTSGKTT). Residues 164–165 (TT), S191, and R199 each bind UDP-N-acetyl-alpha-D-muramoyl-L-alanyl-D-glutamate. K231 is modified (N6-carboxylysine). Meso-2,6-diaminopimelate contacts are provided by residues R394, 418 to 421 (DNPR), G476, and E480. The Meso-diaminopimelate recognition motif motif lies at 418–421 (DNPR).

This sequence belongs to the MurCDEF family. MurE subfamily. Mg(2+) is required as a cofactor. Post-translationally, carboxylation is probably crucial for Mg(2+) binding and, consequently, for the gamma-phosphate positioning of ATP.

The protein localises to the cytoplasm. The catalysed reaction is UDP-N-acetyl-alpha-D-muramoyl-L-alanyl-D-glutamate + meso-2,6-diaminopimelate + ATP = UDP-N-acetyl-alpha-D-muramoyl-L-alanyl-gamma-D-glutamyl-meso-2,6-diaminopimelate + ADP + phosphate + H(+). The protein operates within cell wall biogenesis; peptidoglycan biosynthesis. Its function is as follows. Catalyzes the addition of meso-diaminopimelic acid to the nucleotide precursor UDP-N-acetylmuramoyl-L-alanyl-D-glutamate (UMAG) in the biosynthesis of bacterial cell-wall peptidoglycan. In Corynebacterium glutamicum (strain ATCC 13032 / DSM 20300 / JCM 1318 / BCRC 11384 / CCUG 27702 / LMG 3730 / NBRC 12168 / NCIMB 10025 / NRRL B-2784 / 534), this protein is UDP-N-acetylmuramoyl-L-alanyl-D-glutamate--2,6-diaminopimelate ligase.